We begin with the raw amino-acid sequence, 196 residues long: ATP-dependent Clp protease proteolytic subunit (196 aa).

The active-site Nucleophile is the Ser101. His126 is a catalytic residue.

The protein belongs to the peptidase S14 family. As to quaternary structure, component of the chloroplastic Clp protease core complex.

It localises to the plastid. The protein localises to the chloroplast stroma. The enzyme catalyses Hydrolysis of proteins to small peptides in the presence of ATP and magnesium. alpha-casein is the usual test substrate. In the absence of ATP, only oligopeptides shorter than five residues are hydrolyzed (such as succinyl-Leu-Tyr-|-NHMec, and Leu-Tyr-Leu-|-Tyr-Trp, in which cleavage of the -Tyr-|-Leu- and -Tyr-|-Trp bonds also occurs).. In terms of biological role, cleaves peptides in various proteins in a process that requires ATP hydrolysis. Has a chymotrypsin-like activity. Plays a major role in the degradation of misfolded proteins. The chain is ATP-dependent Clp protease proteolytic subunit from Vitis vinifera (Grape).